A 211-amino-acid polypeptide reads, in one-letter code: Protein-methionine-sulfoxide reductase heme-binding subunit MsrQ (211 aa).

A run of 4 helical transmembrane segments spans residues 17-37 (LAGLLPFLWLVWAINHGGLGA), 82-102 (LWCFAWATLHLTSYALLELGV), 116-136 (PYLTLGIISWVILLALAFTST), and 153-173 (FVYLVAILAPIHYLWSVKIIS).

The protein belongs to the MsrQ family. Heterodimer of a catalytic subunit (MsrP) and a heme-binding subunit (MsrQ). Requires FMN as cofactor. The cofactor is heme b.

The protein localises to the cell inner membrane. Its function is as follows. Part of the MsrPQ system that repairs oxidized periplasmic proteins containing methionine sulfoxide residues (Met-O), using respiratory chain electrons. Thus protects these proteins from oxidative-stress damage caused by reactive species of oxygen and chlorine generated by the host defense mechanisms. MsrPQ is essential for the maintenance of envelope integrity under bleach stress, rescuing a wide series of structurally unrelated periplasmic proteins from methionine oxidation, including the primary periplasmic chaperone SurA and the lipoprotein Pal. MsrQ provides electrons for reduction to the reductase catalytic subunit MsrP, using the quinone pool of the respiratory chain. This chain is Protein-methionine-sulfoxide reductase heme-binding subunit MsrQ, found in Shigella boydii serotype 18 (strain CDC 3083-94 / BS512).